The chain runs to 677 residues: Methionine--tRNA ligase (677 aa).

The short motif at proline 15 to histidine 25 is the 'HIGH' region element. The Zn(2+) site is built by cysteine 146, cysteine 149, cysteine 159, and cysteine 162. A 'KMSKS' region motif is present at residues lysine 333–serine 337. Position 336 (lysine 336) interacts with ATP. A tRNA-binding domain is found at aspartate 575–lysine 677.

This sequence belongs to the class-I aminoacyl-tRNA synthetase family. MetG type 1 subfamily. As to quaternary structure, homodimer. Requires Zn(2+) as cofactor.

It is found in the cytoplasm. It catalyses the reaction tRNA(Met) + L-methionine + ATP = L-methionyl-tRNA(Met) + AMP + diphosphate. In terms of biological role, is required not only for elongation of protein synthesis but also for the initiation of all mRNA translation through initiator tRNA(fMet) aminoacylation. The protein is Methionine--tRNA ligase of Salmonella typhi.